A 405-amino-acid polypeptide reads, in one-letter code: Phosphopentomutase (405 aa).

Mn(2+)-binding residues include Asp-10, Asp-303, His-308, Asp-344, His-345, and His-356.

It belongs to the phosphopentomutase family. Mn(2+) is required as a cofactor.

It localises to the cytoplasm. The catalysed reaction is 2-deoxy-alpha-D-ribose 1-phosphate = 2-deoxy-D-ribose 5-phosphate. It carries out the reaction alpha-D-ribose 1-phosphate = D-ribose 5-phosphate. It functions in the pathway carbohydrate degradation; 2-deoxy-D-ribose 1-phosphate degradation; D-glyceraldehyde 3-phosphate and acetaldehyde from 2-deoxy-alpha-D-ribose 1-phosphate: step 1/2. Its function is as follows. Isomerase that catalyzes the conversion of deoxy-ribose 1-phosphate (dRib-1-P) and ribose 1-phosphate (Rib-1-P) to deoxy-ribose 5-phosphate (dRib-5-P) and ribose 5-phosphate (Rib-5-P), respectively. This Shewanella denitrificans (strain OS217 / ATCC BAA-1090 / DSM 15013) protein is Phosphopentomutase.